The sequence spans 212 residues: Uracil phosphoribosyltransferase (212 aa).

5-phospho-alpha-D-ribose 1-diphosphate-binding positions include arginine 78, arginine 103, and 130-138 (DPMLATGGS). Uracil-binding positions include isoleucine 193 and 198–200 (GDA). Aspartate 199 is a binding site for 5-phospho-alpha-D-ribose 1-diphosphate.

The protein belongs to the UPRTase family. It depends on Mg(2+) as a cofactor.

The catalysed reaction is UMP + diphosphate = 5-phospho-alpha-D-ribose 1-diphosphate + uracil. Its pathway is pyrimidine metabolism; UMP biosynthesis via salvage pathway; UMP from uracil: step 1/1. Allosterically activated by GTP. In terms of biological role, catalyzes the conversion of uracil and 5-phospho-alpha-D-ribose 1-diphosphate (PRPP) to UMP and diphosphate. The sequence is that of Uracil phosphoribosyltransferase from Pseudomonas paraeruginosa (strain DSM 24068 / PA7) (Pseudomonas aeruginosa (strain PA7)).